Here is a 242-residue protein sequence, read N- to C-terminus: 1-(5-phosphoribosyl)-5-[(5-phosphoribosylamino)methylideneamino] imidazole-4-carboxamide isomerase (242 aa).

The active-site Proton acceptor is the Asp10. Asp131 acts as the Proton donor in catalysis.

The protein belongs to the HisA/HisF family.

The protein localises to the cytoplasm. The enzyme catalyses 1-(5-phospho-beta-D-ribosyl)-5-[(5-phospho-beta-D-ribosylamino)methylideneamino]imidazole-4-carboxamide = 5-[(5-phospho-1-deoxy-D-ribulos-1-ylimino)methylamino]-1-(5-phospho-beta-D-ribosyl)imidazole-4-carboxamide. It functions in the pathway amino-acid biosynthesis; L-histidine biosynthesis; L-histidine from 5-phospho-alpha-D-ribose 1-diphosphate: step 4/9. In Granulibacter bethesdensis (strain ATCC BAA-1260 / CGDNIH1), this protein is 1-(5-phosphoribosyl)-5-[(5-phosphoribosylamino)methylideneamino] imidazole-4-carboxamide isomerase.